We begin with the raw amino-acid sequence, 128 residues long: Nanos homolog 1 (128 aa).

Residues 7 to 23 (FNSWSDYLGLSSLISRG) form an essential for its translational repressor activity region. Residues 23 to 58 (GLQPREGGESPRPRWKASSPTPAEPLPSKAAEAHGH) are disordered. The segment at 60 to 114 (GCGFCRSNREAQSLYSSHRLRAPDGRVLCPVLRGYTCPLCGANGDWAHTMRYCPL) adopts a Nanos-type zinc-finger fold. 8 residues coordinate Zn(2+): cysteine 61, cysteine 64, histidine 77, cysteine 88, cysteine 96, cysteine 99, histidine 107, and cysteine 112. Short sequence motifs (C2HC) lie at residues 61–88 (CGFC…RVLC) and 96–112 (CPLC…MRYC).

This sequence belongs to the nanos family. As to quaternary structure, interacts with ccnb1.

The protein resides in the cytoplasm. Its subcellular location is the perinuclear region. In terms of biological role, acts as a translational repressor. Can mediate repression affecting different steps in the translation process: cap-driven, IRES-driven, polyadenylated RNAs or nonpolyadenylated RNAs. Essential for the development of primordial germ cells (PGCs) by ensuring their proper migration and survival. The polypeptide is Nanos homolog 1 (nanos1) (Xenopus tropicalis (Western clawed frog)).